Consider the following 3080-residue polypeptide: Adhesion G-protein coupled receptor G4 (3080 aa).

The first 27 residues, 1 to 27 (MKEHIIYQKLYGLILMSSFIFLSDTLS), serve as a signal peptide directing secretion. At 28–2740 (LKGKKLDFFG…SRSTVDSVNE (2713 aa)) the chain is on the extracellular side. Residues 29–228 (KGKKLDFFGR…IPTVDRTLRC (200 aa)) form the Pentraxin (PTX) domain. 2 disulfides stabilise this stretch: cysteine 58/cysteine 123 and cysteine 200/cysteine 228. Mg(2+) is bound at residue aspartate 202. 4 N-linked (GlcNAc...) asparagine glycosylation sites follow: asparagine 233, asparagine 487, asparagine 836, and asparagine 899. A compositionally biased stretch (polar residues) spans 946–959 (SEGISAGSPTSGST). The tract at residues 946–965 (SEGISAGSPTSGSTHIFGEP) is disordered. The N-linked (GlcNAc...) asparagine glycan is linked to asparagine 1020. The tract at residues 1274–1348 (VTEMSPSKNS…ITPTLTSSNT (75 aa)) is disordered. Polar residues-rich tracts occupy residues 1277–1296 (MSPSKNSFISYSRGTPSLEM), 1305–1315 (TKISSHQTHSP), and 1324–1348 (SDGNLASSPTSGSTQITPTLTSSNT). N-linked (GlcNAc...) asparagine glycosylation is present at asparagine 1519. Over residues 2109 to 2139 (SRTTITANPRTVSHPSSFSRKTMSPSTTDHT) the composition is skewed to polar residues. The tract at residues 2109–2141 (SRTTITANPRTVSHPSSFSRKTMSPSTTDHTLS) is disordered. Residues asparagine 2361 and asparagine 2640 are each glycosylated (N-linked (GlcNAc...) asparagine). The 157-residue stretch at 2578 to 2734 (MAFSIHSYEE…GVLMDLSRST (157 aa)) folds into the GAIN-B domain. 2 cysteine pairs are disulfide-bonded: cysteine 2685–cysteine 2716 and cysteine 2704–cysteine 2718. The interval 2685 to 2734 (CAFWDFENNNGLGGWNSSGCKVKETNVNYTICQCDHLTHFGVLMDLSRST) is GPS. The tract at residues 2723–2734 (HFGVLMDLSRST) is stachel. A helical transmembrane segment spans residues 2741–2766 (QILALITYTGCGISSIFLGVAVVTYI). The Cytoplasmic segment spans residues 2767–2777 (AFHKLRKDYPA). Residues 2778–2800 (KILINLCTALLMLNLVFLINSWL) traverse the membrane as a helical segment. At 2801 to 2806 (SSFQKV) the chain is on the extracellular side. Residues 2807–2835 (GVCITAAVALHYFLLVSFTWMGLEAVHMY) traverse the membrane as a helical segment. A disulfide bond links cysteine 2809 and cysteine 2886. Over 2836–2849 (LALVKVFNIYIPNY) the chain is Cytoplasmic. A helical membrane pass occupies residues 2850–2870 (ILKFCLVGWGIPAIMVAITVS). Residues 2871-2892 (VKKDLYGTLSPTTPFCWIKDDS) are Extracellular-facing. The chain crosses the membrane as a helical span at residues 2893-2918 (IFYISVVAYFCLIFLMNLSMFCTVLV). Residues 2919-2937 (QLNSVKSQIQKTRRKMILH) lie on the Cytoplasmic side of the membrane. A helical membrane pass occupies residues 2938 to 2961 (DLKGTMSLTFLLGLTWGFAFFAWG). At 2962–2965 (PMRN) the chain is on the extracellular side. Residues 2966–2989 (FFLYLFAIFNTLQGFFIFVFHCVM) traverse the membrane as a helical segment. Over 2990-3080 (KESVREQWQI…FDKDPYCSSP (91 aa)) the chain is Cytoplasmic. The segment covering 3051 to 3065 (FKSLGSAQGTPSEIS) has biased composition (polar residues). The tract at residues 3051-3080 (FKSLGSAQGTPSEISFPNDDFDKDPYCSSP) is disordered.

Belongs to the G-protein coupled receptor 2 family. Adhesion G-protein coupled receptor (ADGR) subfamily. Homodimer; homodimerizes via its Pentraxin domain in a calcium-independent manner. Heterodimer of 2 chains generated by proteolytic processing; the large extracellular N-terminal fragment and the membrane-bound C-terminal fragment predominantly remain associated and non-covalently linked. Post-translationally, autoproteolytically processed at the GPS region of the GAIN-B domain; this cleavage modulates receptor activity. In terms of processing, N-glycosylated. In terms of tissue distribution, detected in fetal retina. Highly expressed in normal enterochromaffin cells and in neuroendocrine carcinoma. Detected in normal liver; highly expressed in primary liver carcinoma.

Its subcellular location is the membrane. With respect to regulation, forms a heterodimer of 2 chains generated by proteolytic processing that remain associated through non-covalent interactions mediated by the GAIN-B domain. In the inactivated receptor, the Stachel sequence (also named stalk) is embedded in the GAIN-B domain, where it adopts a beta-strand conformation. On activation, the Stachel moves into the 7 transmembrane region and adopts a twisted hook-shaped configuration that forms contacts within the receptor, leading to coupling of a G-alpha protein, which activates signaling. The cleaved GAIN-B and N-terminal domains can then dissociate from the rest of the receptor. Functionally, orphan adhesion G-protein coupled receptor (aGPCR). Ligand binding causes a conformation change that triggers signaling via guanine nucleotide-binding proteins (G proteins) and modulates the activity of downstream effectors, such as adenylate cyclase. ADGRG4 is coupled to G(s) G proteins and mediates activation of adenylate cyclase activity. May be act as sensor of mechanical forces. This Homo sapiens (Human) protein is Adhesion G-protein coupled receptor G4.